The chain runs to 382 residues: Succinate--CoA ligase [ADP-forming] subunit beta (382 aa).

The ATP-grasp domain occupies 9 to 237; it reads RDLLARYGIP…PSAEPEAERR (229 aa). Residues K45, 52–54, I94, and E99 each bind ATP; that span reads GRG. Positions 192 and 206 each coordinate Mg(2+). Substrate-binding positions include N257 and 314–316; that span reads GIT.

This sequence belongs to the succinate/malate CoA ligase beta subunit family. Heterotetramer of two alpha and two beta subunits. The cofactor is Mg(2+).

It catalyses the reaction succinate + ATP + CoA = succinyl-CoA + ADP + phosphate. The catalysed reaction is GTP + succinate + CoA = succinyl-CoA + GDP + phosphate. Its pathway is carbohydrate metabolism; tricarboxylic acid cycle; succinate from succinyl-CoA (ligase route): step 1/1. Succinyl-CoA synthetase functions in the citric acid cycle (TCA), coupling the hydrolysis of succinyl-CoA to the synthesis of either ATP or GTP and thus represents the only step of substrate-level phosphorylation in the TCA. The beta subunit provides nucleotide specificity of the enzyme and binds the substrate succinate, while the binding sites for coenzyme A and phosphate are found in the alpha subunit. The polypeptide is Succinate--CoA ligase [ADP-forming] subunit beta (Chloroflexus aggregans (strain MD-66 / DSM 9485)).